The following is a 424-amino-acid chain: Glutamate-1-semialdehyde 2,1-aminomutase (424 aa).

Lys266 carries the post-translational modification N6-(pyridoxal phosphate)lysine.

This sequence belongs to the class-III pyridoxal-phosphate-dependent aminotransferase family. HemL subfamily. As to quaternary structure, homodimer. Pyridoxal 5'-phosphate is required as a cofactor.

The protein resides in the cytoplasm. The enzyme catalyses (S)-4-amino-5-oxopentanoate = 5-aminolevulinate. It functions in the pathway porphyrin-containing compound metabolism; protoporphyrin-IX biosynthesis; 5-aminolevulinate from L-glutamyl-tRNA(Glu): step 2/2. This Thermus thermophilus (strain ATCC 27634 / DSM 579 / HB8) protein is Glutamate-1-semialdehyde 2,1-aminomutase.